Here is a 130-residue protein sequence, read N- to C-terminus: Small ribosomal subunit protein uS8 (130 aa).

The protein belongs to the universal ribosomal protein uS8 family. In terms of assembly, part of the 30S ribosomal subunit.

Functionally, one of the primary rRNA binding proteins, it binds directly to 16S rRNA central domain where it helps coordinate assembly of the platform of the 30S subunit. This is Small ribosomal subunit protein uS8 from Thermococcus onnurineus (strain NA1).